The following is a 208-amino-acid chain: FMN-dependent NADH:quinone oxidoreductase 4 (208 aa).

The protein belongs to the azoreductase type 1 family. As to quaternary structure, homodimer. FMN serves as cofactor.

The catalysed reaction is 2 a quinone + NADH + H(+) = 2 a 1,4-benzosemiquinone + NAD(+). The enzyme catalyses N,N-dimethyl-1,4-phenylenediamine + anthranilate + 2 NAD(+) = 2-(4-dimethylaminophenyl)diazenylbenzoate + 2 NADH + 2 H(+). Its function is as follows. Quinone reductase that provides resistance to thiol-specific stress caused by electrophilic quinones. Functionally, also exhibits azoreductase activity. Catalyzes the reductive cleavage of the azo bond in aromatic azo compounds to the corresponding amines. This Bacillus cereus (strain ATCC 10987 / NRS 248) protein is FMN-dependent NADH:quinone oxidoreductase 4.